The chain runs to 804 residues: Endoplasmin (804 aa).

Positions 1–21 (MRVLWVLGLCCVLLTFGFVRA) are cleaved as a signal peptide. An SRT pseudosubstrate motif motif is present at residues 42-44 (SRT). Asn62 carries N-linked (GlcNAc...) asparagine glycosylation. Ser64 bears the Phosphoserine mark. The N-linked (GlcNAc...) asparagine glycan is linked to Asn107. ATP contacts are provided by Asn107, Asp149, and Asn162. Residue Lys168 is modified to N6-(2-hydroxyisobutyryl)lysine. Residue Ser172 is modified to Phosphoserine. Phe199 contacts ATP. N-linked (GlcNAc...) asparagine glycosylation is present at Asn217. Positions 288–323 (TVEEPLEEDETAQEEKEEADDEAAVEEEEEEKKPKT) are disordered. The segment covering 289-317 (VEEPLEEDETAQEEKEEADDEAAVEEEEE) has biased composition (acidic residues). A Phosphoserine modification is found at Ser403. An N6-succinyllysine modification is found at Lys404. The N-linked (GlcNAc...) asparagine glycan is linked to Asn445. Ser447 carries the phosphoserine modification. Lys479 carries the post-translational modification N6-acetyllysine. Asn481 and Asn502 each carry an N-linked (GlcNAc...) asparagine glycan. Lys633 is subject to N6-succinyllysine. The segment at 749–804 (IDPEAQVEEEPEEEPEDTTEDTTDDSEQDEEETDAGAEEEEEEQETEKEPTEKDEL) is disordered. The segment covering 753-794 (AQVEEEPEEEPEDTTEDTTDDSEQDEEETDAGAEEEEEEQET) has biased composition (acidic residues). Positions 795-804 (EKEPTEKDEL) are enriched in basic and acidic residues. A Prevents secretion from ER motif is present at residues 801 to 804 (KDEL).

The protein belongs to the heat shock protein 90 family. Homodimer; disulfide-linked. Component of an EIF2 complex at least composed of CELF1/CUGBP1, CALR, CALR3, EIF2S1, EIF2S2, HSP90B1 and HSPA5. Part of a large chaperone multiprotein complex comprising DNAJB11, HSP90B1, HSPA5, HYOU, PDIA2, PDIA4, PDIA6, PPIB, SDF2L1, UGGT1 and very small amounts of ERP29, but not, or at very low levels, CALR nor CANX. Interacts with AIMP1; regulates its retention in the endoplasmic reticulum. Hyperglycosylated form interacts with OS9; promoting its degradation by the endoplasmic reticulum associated degradation (ERAD). Interacts with CNPY3. This interaction is disrupted in the presence of ATP. Interacts with TLR4 and TLR9, but not with TLR3. Interacts with MZB1 in a calcium-dependent manner. Interacts with METTL23. Interacts with IL1B; the interaction facilitates cargo translocation into the ERGIC. Interacts with EIF2AK3. Post-translationally, phosphorylated by CK2. In terms of processing, N-glycosylated cotranslationally at Asn-217 by STT3A-containing OST-A complex: this glycosylation is constitutive. In response to various stress, 5 additional facultative sites (Asn-62, Asn-107, Asn-445, Asn-481 and Asn-502) can be glycosylated post-translationally by STT3B-containing OST-B complex, leading to a hyperglycosylated form that is degraded by the ER-associated degradation (ERAD) pathway. In normal conditions, the OST-A complex together with CCDC134 prevent glycosylation at facultative sites during protein folding, thereby preventing hyperglycosylation. Mechanistically, nascent HSP90B1 is tethered during translation to a specialized CCDC134-containing translocon that forms a microenvironment for its folding, in which STT3A associates with the SRT pseudosubstrate motif, and prevents access to facultative glycosylation sites until folding is completed, rendering its facultative sites inaccessible to the OST-B complex.

The protein resides in the endoplasmic reticulum lumen. It is found in the sarcoplasmic reticulum lumen. It localises to the melanosome. The enzyme catalyses ATP + H2O = ADP + phosphate + H(+). ATP-dependent chaperone involved in the processing of proteins in the endoplasmic reticulum, regulating their transport. Together with MESD, acts as a modulator of the Wnt pathway by promoting the folding of LRP6, a coreceptor of the canonical Wnt pathway. When associated with CNPY3, required for proper folding of Toll-like receptors. Promotes folding and trafficking of TLR4 to the cell surface. May participate in the unfolding of cytosolic leaderless cargos (lacking the secretion signal sequence) such as the interleukin 1/IL-1 to facilitate their translocation into the ERGIC (endoplasmic reticulum-Golgi intermediate compartment) and secretion; the translocation process is mediated by the cargo receptor TMED10. This is Endoplasmin from Rattus norvegicus (Rat).